A 259-amino-acid polypeptide reads, in one-letter code: Phosphoadenosine 5'-phosphosulfate reductase (259 aa).

Cys244 (nucleophile; cysteine thiosulfonate intermediate) is an active-site residue.

The protein belongs to the PAPS reductase family. CysH subfamily.

It localises to the cytoplasm. It carries out the reaction [thioredoxin]-disulfide + sulfite + adenosine 3',5'-bisphosphate + 2 H(+) = [thioredoxin]-dithiol + 3'-phosphoadenylyl sulfate. It participates in sulfur metabolism; hydrogen sulfide biosynthesis; sulfite from sulfate: step 3/3. Catalyzes the formation of sulfite from phosphoadenosine 5'-phosphosulfate (PAPS) using thioredoxin as an electron donor. The chain is Phosphoadenosine 5'-phosphosulfate reductase from Vibrio parahaemolyticus serotype O3:K6 (strain RIMD 2210633).